The sequence spans 285 residues: Putative sugar uptake protein lmo0424 (285 aa).

The next 9 membrane-spanning stretches (helical) occupy residues 2 to 21 (SIYL…PIIA), 31 to 50 (QLLG…FWIL), 55 to 77 (TVLS…LLQF), 111 to 133 (WQTV…GVVM), 146 to 168 (SVSF…YVVT), 172 to 194 (FDVT…AIGI), 207 to 229 (VTFN…LATA), 233 to 255 (VATS…ILIF), and 262 to 284 (LEWT…LSLL).

It belongs to the GRP transporter (TC 2.A.7.5) family.

The protein localises to the cell membrane. The sequence is that of Putative sugar uptake protein lmo0424 from Listeria monocytogenes serovar 1/2a (strain ATCC BAA-679 / EGD-e).